The sequence spans 398 residues: L-methionine gamma-lyase (398 aa).

Pyridoxal 5'-phosphate-binding positions include 59-61 (YSR) and 89-90 (GM). A substrate-binding site is contributed by Y114. 208–210 (SAT) provides a ligand contact to pyridoxal 5'-phosphate. K211 carries the N6-(pyridoxal phosphate)lysine modification. Position 375 (R375) interacts with substrate.

The protein belongs to the trans-sulfuration enzymes family. L-methionine gamma-lyase subfamily. As to quaternary structure, homotetramer; dimer of active dimers. Pyridoxal 5'-phosphate is required as a cofactor.

It catalyses the reaction L-methionine + H2O = methanethiol + 2-oxobutanoate + NH4(+). The enzyme catalyses L-homocysteine + H2O = 2-oxobutanoate + hydrogen sulfide + NH4(+) + H(+). With respect to regulation, irreversibly inactivated by DL-propargylglycine. Its function is as follows. Catalyzes the alpha,gamma-elimination of L-methionine to produce methanethiol, 2-oxobutanoate and ammonia. Is involved in L-methionine catabolism. In fact, shows a multicatalytic function since it also catalyzes gamma-replacement of L-methionine with thiol compounds, alpha,gamma-elimination and gamma-replacement reactions of L-homocysteine and its S-substituted derivatives, O-substituted-L-homoserines and DL-selenomethionine, and, to a lesser extent, alpha,beta-elimination and beta-replacement reactions of L-cysteine, S-methyl-L-cysteine, and O-acetyl-L-serine. Also catalyzes deamination and gamma-addition reactions of L-vinylglycine. Thus, the enzyme is able to cleave C-S, C-Se, and C-O bonds of sulfur, selenium, and oxygen amino acids, respectively. The protein is L-methionine gamma-lyase of Pseudomonas putida (Arthrobacter siderocapsulatus).